Consider the following 203-residue polypeptide: Small ribosomal subunit protein uS4 (203 aa).

The S4 RNA-binding domain maps to 93–156; it reads QRLDNVVYRL…MKVPAILEAV (64 aa).

Belongs to the universal ribosomal protein uS4 family. As to quaternary structure, part of the 30S ribosomal subunit. Contacts protein S5. The interaction surface between S4 and S5 is involved in control of translational fidelity.

In terms of biological role, one of the primary rRNA binding proteins, it binds directly to 16S rRNA where it nucleates assembly of the body of the 30S subunit. Functionally, with S5 and S12 plays an important role in translational accuracy. This chain is Small ribosomal subunit protein uS4, found in Lactococcus lactis subsp. cremoris (strain MG1363).